The primary structure comprises 526 residues: Rho guanine nucleotide exchange factor 3 (526 aa).

The disordered stretch occupies residues 20–40 (ELPPASGPAKDAEEPSNKRVK). 2 positions are modified to phosphoserine: serine 47 and serine 70. The DH domain occupies 122–304 (KRQEAIFELS…QGIVAEINTK (183 aa)). One can recognise a PH domain in the interval 291–449 (INIIQGIVAE…WLNCIRQAKE (159 aa)). 2 disordered regions span residues 464–502 (EGSF…TSEV) and 507–526 (EHME…ESNV). Polar residues predominate over residues 466–475 (SFLNPTTGSR).

As to quaternary structure, interacts with RHOA and RHOB.

The protein localises to the cytoplasm. Its function is as follows. Acts as a guanine nucleotide exchange factor (GEF) for RhoA and RhoB GTPases. The chain is Rho guanine nucleotide exchange factor 3 (ARHGEF3) from Macaca fascicularis (Crab-eating macaque).